The chain runs to 404 residues: Cytochrome b561 and DOMON domain-containing protein At5g35735 (404 aa).

Positions 1–25 are cleaved as a signal peptide; it reads MDRTQSPKTALFAVLATLLVLTVNG. One can recognise a DOMON domain in the interval 49-164; that stretch reads LGSFLHWTYN…ITANQLWQVG (116 aa). Positions 170 to 369 constitute a Cytochrome b561 domain; sequence VPASHQTSGD…LEPLTWFIVL (200 aa). Residues 172–207 form a disordered region; sequence ASHQTSGDNMRSSGRIDFRTGQASAGGGGSGDRLRK. Positions 173-183 are enriched in polar residues; the sequence is SHQTSGDNMRS. Helical transmembrane passes span 210–230 and 241–261; these read THGV…AMMA and WFYL…AGWA. Histidine 211, histidine 245, and histidine 278 together coordinate heme b. The helical transmembrane segment at 280-300 threads the bilayer; the sequence is NLGIALFTFATLQVFALLVRP. Residue histidine 314 coordinates heme b. 2 helical membrane-spanning segments follow: residues 316-336 and 349-369; these read TVGY…FDIL and ILIF…FIVL. Positions 376–404 are disordered; sequence GNTVAAPTSSKYSNGVNGTTTTGPHHQDA. Polar residues predominate over residues 380-404; the sequence is AAPTSSKYSNGVNGTTTTGPHHQDA.

Requires heme b as cofactor.

The protein localises to the membrane. May act as a catecholamine-responsive trans-membrane electron transporter. This Arabidopsis thaliana (Mouse-ear cress) protein is Cytochrome b561 and DOMON domain-containing protein At5g35735.